The following is a 245-amino-acid chain: Orotidine 5'-phosphate decarboxylase (245 aa).

Substrate contacts are provided by residues aspartate 22, lysine 44, 71–80 (DLKFHDIPNT), threonine 131, arginine 192, glutamine 201, glycine 221, and arginine 222. The active-site Proton donor is lysine 73.

Belongs to the OMP decarboxylase family. Type 1 subfamily. In terms of assembly, homodimer.

It carries out the reaction orotidine 5'-phosphate + H(+) = UMP + CO2. It participates in pyrimidine metabolism; UMP biosynthesis via de novo pathway; UMP from orotate: step 2/2. Functionally, catalyzes the decarboxylation of orotidine 5'-monophosphate (OMP) to uridine 5'-monophosphate (UMP). The chain is Orotidine 5'-phosphate decarboxylase from Yersinia pseudotuberculosis serotype O:1b (strain IP 31758).